A 104-amino-acid chain; its full sequence is NADH-quinone oxidoreductase subunit K (104 aa).

Helical transmembrane passes span 4–24, 31–51, and 67–87; these read VPAS…LFGA, VIVL…LVAF, and LFTM…LIAL.

It belongs to the complex I subunit 4L family. As to quaternary structure, NDH-1 is composed of 14 different subunits. Subunits NuoA, H, J, K, L, M, N constitute the membrane sector of the complex.

The protein resides in the cell membrane. The catalysed reaction is a quinone + NADH + 5 H(+)(in) = a quinol + NAD(+) + 4 H(+)(out). Its function is as follows. NDH-1 shuttles electrons from NADH, via FMN and iron-sulfur (Fe-S) centers, to quinones in the respiratory chain. The immediate electron acceptor for the enzyme in this species is believed to be a menaquinone. Couples the redox reaction to proton translocation (for every two electrons transferred, four hydrogen ions are translocated across the cytoplasmic membrane), and thus conserves the redox energy in a proton gradient. In Bacillus mycoides (strain KBAB4) (Bacillus weihenstephanensis), this protein is NADH-quinone oxidoreductase subunit K.